Reading from the N-terminus, the 472-residue chain is UDP-glucuronosyltransferase (472 aa).

Asparagine 59, asparagine 227, and asparagine 377 each carry an N-linked (GlcNAc...) asparagine glycan. The chain crosses the membrane as a helical span at residues 436–456 (FGFILLILLTVLWVTLKCCLF).

It belongs to the UDP-glycosyltransferase family.

It localises to the microsome membrane. The protein resides in the endoplasmic reticulum membrane. It catalyses the reaction glucuronate acceptor + UDP-alpha-D-glucuronate = acceptor beta-D-glucuronoside + UDP + H(+). Its function is as follows. UDPGT is of major importance in the conjugation and subsequent elimination of potentially toxic xenobiotics and endogenous compounds. The polypeptide is UDP-glucuronosyltransferase (ugt3) (Pleuronectes platessa (European plaice)).